The following is a 98-amino-acid chain: Transcription elongation factor A protein-like 7 (98 aa).

Residues 1–22 (MQKSCNEKEGKPKGSEAKREDE) show a composition bias toward basic and acidic residues. Positions 1-33 (MQKSCNEKEGKPKGSEAKREDEQPCGALEGQRL) are disordered. Residues 59-89 (GEEMTGEEEEMERCLEEIRSLRKKFRALHSN) are a coiled coil.

It belongs to the TFS-II family. TFA subfamily.

It localises to the nucleus. Plays a role in the negative regulation of NF-kappa-B signaling at the basal level by modulating transcriptional activity of NF-kappa-B on its target gene promoters. Associates with cyclin D1 promoter containing Myc E-box sequence and transcriptionally represses cyclin D1 expression. Regulates telomerase reverse transcriptase expression and telomerase activity in both ALT (alternative lengthening of telomeres)and telomerase-positive cell lines. This chain is Transcription elongation factor A protein-like 7 (Tceal7), found in Mus musculus (Mouse).